The sequence spans 502 residues: MGPNDHGFAYILIFLLLSPPTHANRDANRLFEDLIADYNKLVRPVSENGETLVVTFKLKLSQLLDVHEKNQIMTTNVWLQHSWMDYKLRWDPVEYGGVEVLYVPSDTIWLPDVVLYNNADGNYQVTIMTKAKLTYNGTVEWAPPAIYKSMCQIDVEFFPFDRQQCEMKFGSWTYGGLEVDLQHRDKHLEKEIEEDVEGVDGPTKEIVWVVDRGIDLSDYYPSVEWDILNVPGKRHSKRYPCCESPFIDITYEIHLRRKTLFYTVNLIFPSVGISFLTALVFYLPSDGGEKISLCISILISLTVFFLLLVEIIPSTSLVIPLIGKYLLFTMVLVTLSVVVTVVTLNVHYRSPTTHTMPKWMKRLFVDFLPKYLLMTRPQPPGHHSKPNRKFDSRASTFSIGVNHVLGQNSELLSPGLNSNREESSFTLPRDNSPVRSAVESVAYIADHLKNEEDDKQVIEDWKYISVVMDRIFLITFTFACAFGTVVIIARAPSIYDNTPALA.

A signal peptide spans 1–23; the sequence is MGPNDHGFAYILIFLLLSPPTHA. The Extracellular segment spans residues 24–263; the sequence is NRDANRLFED…HLRRKTLFYT (240 aa). Asn136 carries an N-linked (GlcNAc...) asparagine glycan. A disulfide bridge links Cys151 with Cys165. 3 helical membrane passes run 264–284, 293–313, and 326–346; these read VNLI…FYLP, LCIS…EIIP, and LLFT…TLNV. Residues 347-470 lie on the Cytoplasmic side of the membrane; that stretch reads HYRSPTTHTM…WKYISVVMDR (124 aa). The helical transmembrane segment at 471 to 491 threads the bilayer; it reads IFLITFTFACAFGTVVIIARA.

It belongs to the ligand-gated ion channel (TC 1.A.9) family. Acetylcholine receptor (TC 1.A.9.1) subfamily. As to quaternary structure, component of nicotinic acetylcholine receptor. In muscles, composed of 2 non-alpha subunits lev-1 and unc-29, and 3 alpha subunits unc-38, unc-63 and lev-8. In cholinergic motoneurons, composed of 2 non-alpha subunits acr-2 and acr-3, and 3 alpha subunits unc-38, unc-63 and acr-12. Interacts with lev-10. Expressed in body wall muscles, in vulval muscles and in neurons.

It is found in the postsynaptic cell membrane. The protein resides in the cell membrane. In terms of biological role, alpha subunit of nicotinic acetylcholine receptor (nAChR). Probably acts in cholinergic motoneurons to regulate presynaptic neurotransmitter release, thereby ensuring normal level of excitation of cholinergic motoneurons during locomotion. Involved in nAChR sensitivity to nicotine and levamisole. In Caenorhabditis elegans, this protein is Acetylcholine receptor subunit alpha-type unc-63 (unc-63).